The following is a 330-amino-acid chain: Phosphate acyltransferase (330 aa).

Belongs to the PlsX family. As to quaternary structure, homodimer. Probably interacts with PlsY.

It localises to the cytoplasm. It carries out the reaction a fatty acyl-[ACP] + phosphate = an acyl phosphate + holo-[ACP]. The protein operates within lipid metabolism; phospholipid metabolism. Catalyzes the reversible formation of acyl-phosphate (acyl-PO(4)) from acyl-[acyl-carrier-protein] (acyl-ACP). This enzyme utilizes acyl-ACP as fatty acyl donor, but not acyl-CoA. The sequence is that of Phosphate acyltransferase from Campylobacter hominis (strain ATCC BAA-381 / DSM 21671 / CCUG 45161 / LMG 19568 / NCTC 13146 / CH001A).